The primary structure comprises 352 residues: Putative squamosa promoter-binding-like protein 19 (352 aa).

The tract at residues 68–88 (AAAPATRRARGGSGGGGGGGG) is disordered. Gly residues predominate over residues 78 to 88 (GGSGGGGGGGG). An SBP-type zinc finger spans residues 90–167 (AEACSVDGCR…DGHNRRRRKP (78 aa)). Positions 93, 98, 115, 118, 134, 137, 141, and 153 each coordinate Zn(2+). The Bipartite nuclear localization signal signature appears at 150–166 (KKSCRKRLDGHNRRRRK). The interval 152 to 174 (SCRKRLDGHNRRRRKPQHDALNP) is disordered.

The protein resides in the nucleus. Its function is as follows. Trans-acting factor that binds specifically to the consensus nucleotide sequence 5'-TNCGTACAA-3'. This is Putative squamosa promoter-binding-like protein 19 (SPL19) from Oryza sativa subsp. japonica (Rice).